Here is a 230-residue protein sequence, read N- to C-terminus: Peptidyl-prolyl cis-trans isomerase FKBP16-4, chloroplastic (230 aa).

A chloroplast-targeting transit peptide spans 1-56 (MILTMKLVHPLHHSLSSSIPFPSRKRQSKPYRCSLPSPGCEKVIRTETVLPPAPVS). The region spanning 123 to 217 (GSRVAVHYVA…ELDIELLSIK (95 aa)) is the PPIase FKBP-type domain.

Belongs to the FKBP-type PPIase family.

It is found in the plastid. The protein resides in the chloroplast thylakoid lumen. It catalyses the reaction [protein]-peptidylproline (omega=180) = [protein]-peptidylproline (omega=0). Its function is as follows. PPIases accelerate the folding of proteins. It catalyzes the cis-trans isomerization of proline imidic peptide bonds in oligopeptides. The chain is Peptidyl-prolyl cis-trans isomerase FKBP16-4, chloroplastic (FKBP16-4) from Arabidopsis thaliana (Mouse-ear cress).